We begin with the raw amino-acid sequence, 220 residues long: Ribonuclease HII (220 aa).

Residues 32–220 form the RNase H type-2 domain; sequence KHIAGIDEAG…FAPIKGRFDC (189 aa). A divalent metal cation is bound by residues D38, E39, and D130.

The protein belongs to the RNase HII family. Mn(2+) serves as cofactor. Mg(2+) is required as a cofactor.

Its subcellular location is the cytoplasm. The enzyme catalyses Endonucleolytic cleavage to 5'-phosphomonoester.. Its function is as follows. Endonuclease that specifically degrades the RNA of RNA-DNA hybrids. In Brucella canis (strain ATCC 23365 / NCTC 10854 / RM-666), this protein is Ribonuclease HII.